We begin with the raw amino-acid sequence, 180 residues long: Hypoxanthine-guanine phosphoribosyltransferase (180 aa).

Lysine 43 and glycine 44 together coordinate diphosphate. The Mg(2+) site is built by glutamate 99 and aspartate 100. Aspartate 103 (proton acceptor) is an active-site residue. GMP-binding positions include lysine 131, 152 to 153 (FI), and aspartate 159. Arginine 165 lines the diphosphate pocket.

It belongs to the purine/pyrimidine phosphoribosyltransferase family. Requires Mg(2+) as cofactor.

Its subcellular location is the cytoplasm. It catalyses the reaction IMP + diphosphate = hypoxanthine + 5-phospho-alpha-D-ribose 1-diphosphate. The catalysed reaction is GMP + diphosphate = guanine + 5-phospho-alpha-D-ribose 1-diphosphate. Its pathway is purine metabolism; IMP biosynthesis via salvage pathway; IMP from hypoxanthine: step 1/1. The protein operates within purine metabolism; GMP biosynthesis via salvage pathway; GMP from guanine: step 1/1. Purine salvage pathway enzyme that catalyzes the transfer of the ribosyl-5-phosphate group from 5-phospho-alpha-D-ribose 1-diphosphate (PRPP) to the N9 position of the 6-oxopurines hypoxanthine and guanine to form the corresponding ribonucleotides IMP (inosine 5'-monophosphate) and GMP (guanosine 5'-monophosphate), with the release of PPi. The sequence is that of Hypoxanthine-guanine phosphoribosyltransferase (hpt) from Streptococcus thermophilus (strain CNRZ 1066).